The following is a 170-amino-acid chain: Allophycocyanin subunit beta-18 (170 aa).

At Asn-74 the chain carries N4-methylasparagine. Position 84 (Cys-84) interacts with (2R,3E)-phycocyanobilin.

The protein belongs to the phycobiliprotein family. In terms of assembly, heterodimer of an alpha and a beta chain. In terms of processing, contains one covalently linked bilin chromophore.

The protein localises to the plastid. Its subcellular location is the chloroplast thylakoid membrane. Light-harvesting photosynthetic bile pigment-protein from the phycobiliprotein complex. Allophycocyanin has a maximum absorption at approximately 650 nanometers. This chain is Allophycocyanin subunit beta-18 (apcF), found in Cyanidium caldarium (Red alga).